The following is a 125-amino-acid chain: SKP1-like protein 7 (125 aa).

Residues M94–E125 are interaction with the F-box domain of F-box proteins.

The protein belongs to the SKP1 family. As to quaternary structure, part of a SCF (SKP1-cullin-F-box) protein ligase complex. Restricted to siliques.

It localises to the nucleus. It participates in protein modification; protein ubiquitination. Functionally, involved in ubiquitination and subsequent proteasomal degradation of target proteins. Together with CUL1, RBX1 and a F-box protein, it forms a SCF E3 ubiquitin ligase complex. The functional specificity of this complex depends on the type of F-box protein. In the SCF complex, it serves as an adapter that links the F-box protein to CUL1. This chain is SKP1-like protein 7 (ASK7), found in Arabidopsis thaliana (Mouse-ear cress).